The chain runs to 215 residues: 23.2 kDa heat shock protein (215 aa).

A signal peptide spans 1–27; it reads MASMRTAAAAAMLACIAVVLASTAADG. Residues 69-189 enclose the sHSP domain; the sequence is DVAMLSMARV…GPRVVGIASA (121 aa). The interval 183–215 is disordered; it reads VVGIASAGGDDGGKKSIGGAGEGQNQQAKKVEL. Over residues 205 to 215 the composition is skewed to polar residues; it reads GQNQQAKKVEL.

The protein belongs to the small heat shock protein (HSP20) family. In terms of assembly, may form oligomeric structures.

The protein resides in the endoplasmic reticulum. The sequence is that of 23.2 kDa heat shock protein (HSP23.2) from Oryza sativa subsp. japonica (Rice).